The sequence spans 148 residues: CASP-like protein 1 (148 aa).

The next 3 membrane-spanning stretches (helical) occupy residues 31 to 51 (FIYFVAAFSVAGLYSIITSLL), 74 to 94 (VLLLGIVAAAIGAAGGVGYIG), and 121 to 141 (IAAGLIASIVLVLLILLSFFT).

This sequence belongs to the Casparian strip membrane proteins (CASP) family. In terms of assembly, homodimer and heterodimers.

It localises to the cell membrane. The chain is CASP-like protein 1 from Panax ginseng (Korean ginseng).